The primary structure comprises 80 residues: MDPIRCFSCNKIMKSPNEKGMVFVRNMKKEDREQFFKKFNYTRLCCKRMYLSAVNFQDELFQYENARSTLNVDGTITKPF.

This is an uncharacterized protein from Invertebrate iridescent virus 6 (IIV-6).